Reading from the N-terminus, the 98-residue chain is Aspartyl/glutamyl-tRNA(Asn/Gln) amidotransferase subunit C (98 aa).

The interval E75 to A98 is disordered.

This sequence belongs to the GatC family. In terms of assembly, heterotrimer of A, B and C subunits.

The catalysed reaction is L-glutamyl-tRNA(Gln) + L-glutamine + ATP + H2O = L-glutaminyl-tRNA(Gln) + L-glutamate + ADP + phosphate + H(+). It catalyses the reaction L-aspartyl-tRNA(Asn) + L-glutamine + ATP + H2O = L-asparaginyl-tRNA(Asn) + L-glutamate + ADP + phosphate + 2 H(+). Allows the formation of correctly charged Asn-tRNA(Asn) or Gln-tRNA(Gln) through the transamidation of misacylated Asp-tRNA(Asn) or Glu-tRNA(Gln) in organisms which lack either or both of asparaginyl-tRNA or glutaminyl-tRNA synthetases. The reaction takes place in the presence of glutamine and ATP through an activated phospho-Asp-tRNA(Asn) or phospho-Glu-tRNA(Gln). The sequence is that of Aspartyl/glutamyl-tRNA(Asn/Gln) amidotransferase subunit C from Pseudarthrobacter chlorophenolicus (strain ATCC 700700 / DSM 12829 / CIP 107037 / JCM 12360 / KCTC 9906 / NCIMB 13794 / A6) (Arthrobacter chlorophenolicus).